Consider the following 392-residue polypeptide: Sterol methyltransferase-like 3 (392 aa).

A helical membrane pass occupies residues 20–42 (VTPWQAAAGVTAAIFIGSYLWHS).

Belongs to the class I-like SAM-binding methyltransferase superfamily. Erg6/SMT family.

The protein resides in the microsome membrane. Unable to convert squalene, botryococcene, cycloartenol, zymosterol or lanosterol to mono-, di-, tri- or tetramethylated derivatives. The sequence is that of Sterol methyltransferase-like 3 (SMT-3) from Botryococcus braunii (Green alga).